We begin with the raw amino-acid sequence, 343 residues long: tRNA N6-adenosine threonylcarbamoyltransferase (343 aa).

Fe cation contacts are provided by His120 and His124. Substrate is bound by residues 142–146 (VVSGG), Asp175, Gly188, Asp192, and Asn281. Asp310 serves as a coordination point for Fe cation.

Belongs to the KAE1 / TsaD family. The cofactor is Fe(2+).

Its subcellular location is the cytoplasm. It catalyses the reaction L-threonylcarbamoyladenylate + adenosine(37) in tRNA = N(6)-L-threonylcarbamoyladenosine(37) in tRNA + AMP + H(+). Its function is as follows. Required for the formation of a threonylcarbamoyl group on adenosine at position 37 (t(6)A37) in tRNAs that read codons beginning with adenine. Is involved in the transfer of the threonylcarbamoyl moiety of threonylcarbamoyl-AMP (TC-AMP) to the N6 group of A37, together with TsaE and TsaB. TsaD likely plays a direct catalytic role in this reaction. The polypeptide is tRNA N6-adenosine threonylcarbamoyltransferase (Bacillus thuringiensis subsp. konkukian (strain 97-27)).